Consider the following 415-residue polypeptide: uncharacterized protein (415 aa).

Residues C85, C91, C94, and C175 each coordinate [4Fe-4S] cluster. Residues Q248, Y276, E297, and N344 each contribute to the S-adenosyl-L-methionine site. The Nucleophile role is filled by C371.

This sequence belongs to the class I-like SAM-binding methyltransferase superfamily. RNA M5U methyltransferase family.

This is an uncharacterized protein from Leptospira interrogans serogroup Icterohaemorrhagiae serovar copenhageni (strain Fiocruz L1-130).